The following is a 343-amino-acid chain: N-acetyl-gamma-glutamyl-phosphate reductase (343 aa).

The active site involves Cys147.

This sequence belongs to the NAGSA dehydrogenase family. Type 1 subfamily.

It is found in the cytoplasm. It carries out the reaction N-acetyl-L-glutamate 5-semialdehyde + phosphate + NADP(+) = N-acetyl-L-glutamyl 5-phosphate + NADPH + H(+). It participates in amino-acid biosynthesis; L-arginine biosynthesis; N(2)-acetyl-L-ornithine from L-glutamate: step 3/4. Functionally, catalyzes the NADPH-dependent reduction of N-acetyl-5-glutamyl phosphate to yield N-acetyl-L-glutamate 5-semialdehyde. In Staphylococcus aureus (strain Mu3 / ATCC 700698), this protein is N-acetyl-gamma-glutamyl-phosphate reductase.